A 292-amino-acid chain; its full sequence is Diaminopimelate epimerase (292 aa).

Substrate is bound by residues asparagine 13, glutamine 46, and asparagine 66. Residue cysteine 75 is the Proton donor of the active site. Residues 76–77, asparagine 166, asparagine 199, and 217–218 each bind substrate; these read GN and ER. The active-site Proton acceptor is the cysteine 226. 227-228 lines the substrate pocket; it reads GT.

The protein belongs to the diaminopimelate epimerase family. As to quaternary structure, homodimer.

It localises to the cytoplasm. The enzyme catalyses (2S,6S)-2,6-diaminopimelate = meso-2,6-diaminopimelate. Its pathway is amino-acid biosynthesis; L-lysine biosynthesis via DAP pathway; DL-2,6-diaminopimelate from LL-2,6-diaminopimelate: step 1/1. Functionally, catalyzes the stereoinversion of LL-2,6-diaminopimelate (L,L-DAP) to meso-diaminopimelate (meso-DAP), a precursor of L-lysine and an essential component of the bacterial peptidoglycan. The sequence is that of Diaminopimelate epimerase from Ralstonia pickettii (strain 12J).